The primary structure comprises 457 residues: RuvB-like helicase 1 (457 aa).

Residue G72–T79 coordinates ATP.

Belongs to the RuvB family. May form heterododecamers with RVB2. Component of the SWR1 chromatin remodeling complex, the INO80 chromatin remodeling complex, and of the R2TP complex.

It localises to the nucleus. The enzyme catalyses ATP + H2O = ADP + phosphate + H(+). In terms of biological role, DNA helicase which participates in several chromatin remodeling complexes, including the SWR1 and the INO80 complexes. The SWR1 complex mediates the ATP-dependent exchange of histone H2A for the H2A variant HZT1 leading to transcriptional regulation of selected genes by chromatin remodeling. The INO80 complex remodels chromatin by shifting nucleosomes and is involved in DNA repair. Also involved in pre-rRNA processing. This chain is RuvB-like helicase 1 (RBV1), found in Debaryomyces hansenii (strain ATCC 36239 / CBS 767 / BCRC 21394 / JCM 1990 / NBRC 0083 / IGC 2968) (Yeast).